A 128-amino-acid polypeptide reads, in one-letter code: Large-conductance mechanosensitive channel (128 aa).

Transmembrane regions (helical) follow at residues 10–30 (FAMR…SAFG) and 76–96 (GLFI…FMMI).

The protein belongs to the MscL family. Homopentamer.

Its subcellular location is the cell inner membrane. Channel that opens in response to stretch forces in the membrane lipid bilayer. May participate in the regulation of osmotic pressure changes within the cell. The sequence is that of Large-conductance mechanosensitive channel from Haemophilus influenzae (strain PittEE).